Reading from the N-terminus, the 154-residue chain is uncharacterized protein (154 aa).

The next 2 membrane-spanning stretches (helical) occupy residues 19 to 39 (LFAY…GLLL) and 51 to 71 (ADQV…LLFA).

It is found in the cell membrane. This is an uncharacterized protein from Mycobacterium tuberculosis (strain CDC 1551 / Oshkosh).